We begin with the raw amino-acid sequence, 82 residues long: uncharacterized protein (82 aa).

This sequence belongs to the chlamydial CPn_0711/CT_665/TC_0036 family.

This is an uncharacterized protein from Chlamydia pneumoniae (Chlamydophila pneumoniae).